The chain runs to 188 residues: UPF0301 protein XC_1365 (188 aa).

It belongs to the UPF0301 (AlgH) family.

This chain is UPF0301 protein XC_1365, found in Xanthomonas campestris pv. campestris (strain 8004).